Consider the following 434-residue polypeptide: Histidinol dehydrogenase (434 aa).

Positions 130, 188, and 211 each coordinate NAD(+). Substrate contacts are provided by Ser237, Gln259, and His262. The Zn(2+) site is built by Gln259 and His262. Active-site proton acceptor residues include Glu326 and His327. Substrate is bound by residues His327, Asp360, Glu414, and His419. Position 360 (Asp360) interacts with Zn(2+). Zn(2+) is bound at residue His419.

The protein belongs to the histidinol dehydrogenase family. In terms of assembly, homodimer. Zn(2+) is required as a cofactor.

The catalysed reaction is L-histidinol + 2 NAD(+) + H2O = L-histidine + 2 NADH + 3 H(+). It participates in amino-acid biosynthesis; L-histidine biosynthesis; L-histidine from 5-phospho-alpha-D-ribose 1-diphosphate: step 9/9. Functionally, catalyzes the sequential NAD-dependent oxidations of L-histidinol to L-histidinaldehyde and then to L-histidine. This is Histidinol dehydrogenase from Shigella sonnei (strain Ss046).